Consider the following 276-residue polypeptide: Tryptophan synthase alpha chain (276 aa).

Residues glutamate 49 and aspartate 60 each act as proton acceptor in the active site.

This sequence belongs to the TrpA family. In terms of assembly, tetramer of two alpha and two beta chains.

The enzyme catalyses (1S,2R)-1-C-(indol-3-yl)glycerol 3-phosphate + L-serine = D-glyceraldehyde 3-phosphate + L-tryptophan + H2O. The protein operates within amino-acid biosynthesis; L-tryptophan biosynthesis; L-tryptophan from chorismate: step 5/5. Its function is as follows. The alpha subunit is responsible for the aldol cleavage of indoleglycerol phosphate to indole and glyceraldehyde 3-phosphate. The chain is Tryptophan synthase alpha chain from Corynebacterium aurimucosum (strain ATCC 700975 / DSM 44827 / CIP 107346 / CN-1) (Corynebacterium nigricans).